The following is a 307-amino-acid chain: Probable E3 SUMO-protein ligase RNF212 (307 aa).

Residues 7-46 (CNRCFQSPHRKSSFSLTSCGHVYCHSCLLKGTKNECVICQ) form an RING-type zinc finger. Residues 91–124 (RRRLVAFYQEKISQLEESLRKSVLQIKQLQSMRS) adopt a coiled-coil conformation. Residues 164-291 (LTPPARKPEM…KMSPFLPSTP (128 aa)) are disordered. 3 stretches are compositionally biased toward polar residues: residues 202–213 (LSLTPSHASMTK), 233–252 (SQLSSRATQGPSPSVSSSWT), and 259–271 (ISISGLLQRQCAG).

In terms of tissue distribution, specifically expressed in meiocytes of the gonads.

The protein resides in the nucleus. It is found in the chromosome. It functions in the pathway protein modification; protein sumoylation. Its function is as follows. SUMO E3 ligase that acts as a regulator of crossing-over during meiosis: required to couple chromosome synapsis to the formation of crossover-specific recombination complexes. Localizes to recombination sites and stabilizes meiosis-specific recombination factors, such as MutS-gamma complex proteins (MSH4 and MSH5) and TEX11. May mediate sumoylation of target proteins MSH4 and/or MSH5, leading to enhance their binding to recombination sites. Acts as a limiting factor for crossover designation and/or reinforcement and plays an antagonist role with CCNB1IP1/HEI10 in the regulation of meiotic recombination. The polypeptide is Probable E3 SUMO-protein ligase RNF212 (Rnf212) (Mus musculus (Mouse)).